The primary structure comprises 439 residues: uncharacterized protein (439 aa).

Low complexity predominate over residues 268–284 (QQQQQQQPQHNNNNTQV). Residues 268–439 (QQQQQQQPQH…RTRFTTTNLH (172 aa)) form a disordered region. Pro residues predominate over residues 285-328 (QPPPPSQQLPPPPKPQPQLPKPQPQKPQPQLPKPPQQPKPPQEP). The segment covering 350–439 (QEQQQQPPQE…RTRFTTTNLH (90 aa)) has biased composition (low complexity).

This is an uncharacterized protein from Dictyostelium discoideum (Social amoeba).